A 558-amino-acid chain; its full sequence is Formate--tetrahydrofolate ligase (558 aa).

66–73 (TPAGEGKT) is a binding site for ATP.

Belongs to the formate--tetrahydrofolate ligase family.

It catalyses the reaction (6S)-5,6,7,8-tetrahydrofolate + formate + ATP = (6R)-10-formyltetrahydrofolate + ADP + phosphate. It participates in one-carbon metabolism; tetrahydrofolate interconversion. This Neisseria meningitidis serogroup C / serotype 2a (strain ATCC 700532 / DSM 15464 / FAM18) protein is Formate--tetrahydrofolate ligase.